Consider the following 192-residue polypeptide: uncharacterized protein (192 aa).

The first 17 residues, 1-17 (MFLHLILLAGLAPVVYL), serve as a signal peptide directing secretion.

This is an uncharacterized protein from Caenorhabditis elegans.